We begin with the raw amino-acid sequence, 150 residues long: D-aminoacyl-tRNA deacylase (150 aa).

The Gly-cisPro motif, important for rejection of L-amino acids motif lies at 138–139 (GP).

This sequence belongs to the DTD family. As to quaternary structure, homodimer.

Its subcellular location is the cytoplasm. It catalyses the reaction glycyl-tRNA(Ala) + H2O = tRNA(Ala) + glycine + H(+). It carries out the reaction a D-aminoacyl-tRNA + H2O = a tRNA + a D-alpha-amino acid + H(+). Its function is as follows. An aminoacyl-tRNA editing enzyme that deacylates mischarged D-aminoacyl-tRNAs. Also deacylates mischarged glycyl-tRNA(Ala), protecting cells against glycine mischarging by AlaRS. Acts via tRNA-based rather than protein-based catalysis; rejects L-amino acids rather than detecting D-amino acids in the active site. By recycling D-aminoacyl-tRNA to D-amino acids and free tRNA molecules, this enzyme counteracts the toxicity associated with the formation of D-aminoacyl-tRNA entities in vivo and helps enforce protein L-homochirality. This Cytophaga hutchinsonii (strain ATCC 33406 / DSM 1761 / CIP 103989 / NBRC 15051 / NCIMB 9469 / D465) protein is D-aminoacyl-tRNA deacylase.